We begin with the raw amino-acid sequence, 176 residues long: Ribosome maturation factor RimM (176 aa).

The PRC barrel domain maps to 99–174 (KDEFYVRDLI…IVLIQPELWN (76 aa)).

The protein belongs to the RimM family. In terms of assembly, binds ribosomal protein uS19.

It localises to the cytoplasm. In terms of biological role, an accessory protein needed during the final step in the assembly of 30S ribosomal subunit, possibly for assembly of the head region. Essential for efficient processing of 16S rRNA. May be needed both before and after RbfA during the maturation of 16S rRNA. It has affinity for free ribosomal 30S subunits but not for 70S ribosomes. The protein is Ribosome maturation factor RimM of Leptospira borgpetersenii serovar Hardjo-bovis (strain JB197).